Consider the following 405-residue polypeptide: L-carnitine CoA-transferase (405 aa).

K97 and R104 together coordinate CoA. The active-site Nucleophile is the D169.

This sequence belongs to the CoA-transferase III family. CaiB subfamily. Homodimer.

Its subcellular location is the cytoplasm. The catalysed reaction is crotonobetainyl-CoA + (R)-carnitine = crotonobetaine + (R)-carnitinyl-CoA. It catalyses the reaction 4-(trimethylamino)butanoyl-CoA + (R)-carnitine = (R)-carnitinyl-CoA + 4-(trimethylamino)butanoate. Its pathway is amine and polyamine metabolism; carnitine metabolism. In terms of biological role, catalyzes the reversible transfer of the CoA moiety from gamma-butyrobetainyl-CoA to L-carnitine to generate L-carnitinyl-CoA and gamma-butyrobetaine. Is also able to catalyze the reversible transfer of the CoA moiety from gamma-butyrobetainyl-CoA or L-carnitinyl-CoA to crotonobetaine to generate crotonobetainyl-CoA. The protein is L-carnitine CoA-transferase of Shigella flexneri serotype 5b (strain 8401).